Reading from the N-terminus, the 432-residue chain is MASGMGPLKRLAAWFSDLRLAIVLLLLIALASAVGTGIPQGDPPSSYIDAYSDTPWLGLLHGEQVLQLQLDHVYSSGWFLALLAWLGLALILCSWRRQWPALMAARRWIDYRTTRQLSKLAIAESQPCPDTSQGLTQLETVLRASGWQVQRKPQRLAARRGAIGRVGPLLVHTGLVLLMLGAAWGALAGNRLERFLAPGRSLDLLDRDGTSQLTITLDRFAIDRDPAGRTEQFRSALKLQGPNQSLDAEISVNHPLRHRGITVYQADWSLATISLQIGRSPVLELPLQTYPELGDQIWGLVLPTRPDGTEPVFLSLESEQGPATVFDADGQQLARLRPGGPSAEVKGLPMRVDAVLPASGLLLKRDPGVPLVYLGFAVLLVGGGLSLVATRQLWAIAADGTLSVGGLCNRNLAAFATELPQLLQQVVVDQQG.

Helical transmembrane passes span 18 to 38, 76 to 96, and 166 to 186; these read LRLA…GTGI, SGWF…CSWR, and VGPL…AWGA.

The protein belongs to the Ccs1/CcsB family. In terms of assembly, may interact with CcsA.

It localises to the cellular thylakoid membrane. Its function is as follows. Required during biogenesis of c-type cytochromes (cytochrome c6 and cytochrome f) at the step of heme attachment. This Synechococcus sp. (strain CC9605) protein is Cytochrome c biogenesis protein CcsB.